Here is a 314-residue protein sequence, read N- to C-terminus: MANVTLVTGFLLMGFSNIQKLRILYGVLFLLIYLAALMSNLLIITLITLDVKLQTPMYFFLKNLSFLDVFLVSVPIPKFIVNNLTHNNSISILGCAFQLLLMTSFSAGEIFILTAMSYDRYVAICCPLNYEVIMNTGVCVLMASVSWAIGGLFGTAYTAGTFSMPFCGSSVIPQFFCDVPSLLRISCSETLMVIYAGIGVGACLSISCFICIVISYIYIFSTVLKIPTTKGQSKAFSTCFPHLTVFTVFIITAYFVYLKPPSNSPSVIDRLLSVIYTVMPPVFNPVTYSLRNNDMKCALIRLLQKTYGQEAYFI.

At 1–26 (MANVTLVTGFLLMGFSNIQKLRILYG) the chain is on the extracellular side. An N-linked (GlcNAc...) asparagine glycan is attached at asparagine 3. Residues 27–47 (VLFLLIYLAALMSNLLIITLI) form a helical membrane-spanning segment. Topologically, residues 48-55 (TLDVKLQT) are cytoplasmic. The chain crosses the membrane as a helical span at residues 56-76 (PMYFFLKNLSFLDVFLVSVPI). At 77-91 (PKFIVNNLTHNNSIS) the chain is on the extracellular side. Asparagine 83 carries an N-linked (GlcNAc...) asparagine glycan. A helical membrane pass occupies residues 92 to 112 (ILGCAFQLLLMTSFSAGEIFI). An intrachain disulfide couples cysteine 95 to cysteine 177. Residues 113-136 (LTAMSYDRYVAICCPLNYEVIMNT) are Cytoplasmic-facing. A helical membrane pass occupies residues 137–157 (GVCVLMASVSWAIGGLFGTAY). The Extracellular segment spans residues 158–193 (TAGTFSMPFCGSSVIPQFFCDVPSLLRISCSETLMV). The helical transmembrane segment at 194–214 (IYAGIGVGACLSISCFICIVI) threads the bilayer. Over 215–237 (SYIYIFSTVLKIPTTKGQSKAFS) the chain is Cytoplasmic. Residues 238 to 258 (TCFPHLTVFTVFIITAYFVYL) traverse the membrane as a helical segment. The Extracellular segment spans residues 259 to 267 (KPPSNSPSV). Residues 268–290 (IDRLLSVIYTVMPPVFNPVTYSL) form a helical membrane-spanning segment. Topologically, residues 291–314 (RNNDMKCALIRLLQKTYGQEAYFI) are cytoplasmic.

This sequence belongs to the G-protein coupled receptor 1 family.

It localises to the cell membrane. Its function is as follows. Odorant receptor. This Homo sapiens (Human) protein is Olfactory receptor 14A2 (OR14A2).